Reading from the N-terminus, the 331-residue chain is 5-dehydro-2-deoxygluconokinase (331 aa).

It belongs to the carbohydrate kinase PfkB family.

The catalysed reaction is 5-dehydro-2-deoxy-D-gluconate + ATP = 6-phospho-5-dehydro-2-deoxy-D-gluconate + ADP + H(+). Its pathway is polyol metabolism; myo-inositol degradation into acetyl-CoA; acetyl-CoA from myo-inositol: step 5/7. In terms of biological role, catalyzes the phosphorylation of 5-dehydro-2-deoxy-D-gluconate (2-deoxy-5-keto-D-gluconate or DKG) to 6-phospho-5-dehydro-2-deoxy-D-gluconate (DKGP). This is 5-dehydro-2-deoxygluconokinase from Halalkalibacterium halodurans (strain ATCC BAA-125 / DSM 18197 / FERM 7344 / JCM 9153 / C-125) (Bacillus halodurans).